The chain runs to 395 residues: ATP synthase subunit a (395 aa).

The next 5 membrane-spanning stretches (helical) occupy residues 153-173 (FTNP…LVYF), 246-266 (HFLI…IVGF), 273-293 (FLSF…LVLL), 313-333 (MMAG…MLCM), and 339-359 (FIGD…ELGV).

Belongs to the ATPase A chain family. As to quaternary structure, F-type ATPases have 2 components, CF(1) - the catalytic core - and CF(0) - the membrane proton channel. CF(1) has five subunits: alpha(3), beta(3), gamma(1), delta(1), epsilon(1). CF(0) has three main subunits: a, b and c.

It localises to the mitochondrion inner membrane. In terms of biological role, mitochondrial membrane ATP synthase (F(1)F(0) ATP synthase or Complex V) produces ATP from ADP in the presence of a proton gradient across the membrane which is generated by electron transport complexes of the respiratory chain. F-type ATPases consist of two structural domains, F(1) - containing the extramembraneous catalytic core and F(0) - containing the membrane proton channel, linked together by a central stalk and a peripheral stalk. During catalysis, ATP synthesis in the catalytic domain of F(1) is coupled via a rotary mechanism of the central stalk subunits to proton translocation. Key component of the proton channel; it may play a direct role in the translocation of protons across the membrane. The protein is ATP synthase subunit a (ATP6) of Nicotiana tabacum (Common tobacco).